Here is a 347-residue protein sequence, read N- to C-terminus: MTNKTSLSYKDAGVDIDAGNDLVDRIKGVVKQTRRPEVMGGLGGFGALCALPQKYREPILVSGTDGVGTKLRLAMDLKRHDTIGIDLVAMCVNDLVVQGAEPLFFLDYFATGKLDVDTAASVITGIAEGCKQSGCALVGGETAEMPGMYHGDDYDVAGFCVGVVEKSEIIDGSKVTPGDVLVALGASGPHSNGYSLVRKILDVSNTNPEQTSLEGKSLADHLLEPTKIYVKSILSLIEQLDIHAIAHLTGGGFWENIPRVLPQGMQAVIDEASWQWPAVFSWLQHAGNVSRHEMYRTFNCGVGMVVALPAELADKAVELLTASGEKAWKIGVIAAATEGAEQVIINP.

This sequence belongs to the AIR synthase family.

It localises to the cytoplasm. The enzyme catalyses 2-formamido-N(1)-(5-O-phospho-beta-D-ribosyl)acetamidine + ATP = 5-amino-1-(5-phospho-beta-D-ribosyl)imidazole + ADP + phosphate + H(+). It functions in the pathway purine metabolism; IMP biosynthesis via de novo pathway; 5-amino-1-(5-phospho-D-ribosyl)imidazole from N(2)-formyl-N(1)-(5-phospho-D-ribosyl)glycinamide: step 2/2. The protein is Phosphoribosylformylglycinamidine cyclo-ligase of Yersinia pseudotuberculosis serotype IB (strain PB1/+).